A 358-amino-acid polypeptide reads, in one-letter code: WD repeat-containing protein 53 (358 aa).

WD repeat units follow at residues 8–47, 92–131, 134–174, 195–234, and 239–278; these read GHSS…GHMQ, VNEE…VTRS, RHSN…PVWI, LNPA…CERE, and GHTL…EKLQ. Positions 288-309 are disordered; sequence KKAKRAACPTQGGNSRAPGAED.

The protein belongs to the WD repeat WDR53 family.

The chain is WD repeat-containing protein 53 (Wdr53) from Mus musculus (Mouse).